Reading from the N-terminus, the 423-residue chain is MAKLTESMTNVLEGDSMDQDVESPVAIHQPKLPKQARDDLPRHISRDRTKRKIQRYVRKDGKCNVHHGNVRETYRYLTDIFTTLVDLKWRFNLLIFVMVYTVTWLFFGMIWWLIAYIRGDMDHIEDPSWTPCVTNLNGFVSAFLFSIETETTIGYGYRVITDKCPEGIILLLIQSVLGSIVNAFMVGCMFVKISQPKKRAETLVFSTHAVISMRDGKLCLMFRVGDLRNSHIVEASIRAKLIKSKQTSEGEFIPLNQTDINVGYYTGDDRLSLVSPLIISHEINQQSPFWEISKAQLPKEELEIVVILEGMVEATGMTCQARSSYITSEILWGYRFTPVLTLEDGFYEVDYNSFHETYETSTPSLSAKELAELASRAELPLSWSVSSKLNQHAELETEEEEKNLEEQTERNGDVANLENESKV.

Over 1–89 the chain is Cytoplasmic; sequence MAKLTESMTN…IFTTLVDLKW (89 aa). A phosphoserine mark is found at Ser16 and Ser23. The chain crosses the membrane as a helical span at residues 90-114; the sequence is RFNLLIFVMVYTVTWLFFGMIWWLI. At 115-138 the chain is on the extracellular side; the sequence is AYIRGDMDHIEDPSWTPCVTNLNG. Positions 139 to 150 form an intramembrane region, helical; Pore-forming; the sequence is FVSAFLFSIETE. An intramembrane region (pore-forming) is located at residues 151-157; the sequence is TTIGYGY. A Selectivity filter motif is present at residues 152 to 157; the sequence is TIGYGY. The Extracellular portion of the chain corresponds to 158–166; that stretch reads RVITDKCPE. Residues 167 to 188 form a helical membrane-spanning segment; sequence GIILLLIQSVLGSIVNAFMVGC. Over 189-423 the chain is Cytoplasmic; that stretch reads MFVKISQPKK…VANLENESKV (235 aa). Residues 390 to 423 form a disordered region; sequence NQHAELETEEEEKNLEEQTERNGDVANLENESKV. The PDZ-binding motif lies at 420–423; the sequence is ESKV.

It belongs to the inward rectifier-type potassium channel (TC 1.A.2.1) family. KCNJ6 subfamily. In terms of assembly, associates with KCNJ3/GIRK1 or KCNJ5/GRIK4 to form a G-protein-activated heteromultimer pore-forming unit. The resulting inward current is much larger. Interacts (via PDZ-binding motif) with SNX27 (via PDZ domain); the interaction is required when endocytosed to prevent degradation in lysosomes and promote recycling to the plasma membrane.

It localises to the membrane. The catalysed reaction is K(+)(in) = K(+)(out). Activated by phosphatidylinositol 4,5 biphosphate (PtdIns(4,5)P2). Inward rectifier potassium channels are characterized by a greater tendency to allow potassium to flow into the cell rather than out of it. Their voltage dependence is regulated by the concentration of extracellular potassium; as external potassium is raised, the voltage range of the channel opening shifts to more positive voltages. The inward rectification is mainly due to the blockage of outward current by internal magnesium. This potassium channel may be involved in the regulation of insulin secretion by glucose and/or neurotransmitters acting through G-protein-coupled receptors. The protein is G protein-activated inward rectifier potassium channel 2 (KCNJ6) of Pongo abelii (Sumatran orangutan).